The following is a 198-amino-acid chain: Peptidyl-tRNA hydrolase (198 aa).

Y18 contributes to the tRNA binding site. H23 serves as the catalytic Proton acceptor. Residues F69, N71, and N117 each contribute to the tRNA site.

Belongs to the PTH family. Monomer.

The protein resides in the cytoplasm. It carries out the reaction an N-acyl-L-alpha-aminoacyl-tRNA + H2O = an N-acyl-L-amino acid + a tRNA + H(+). Its function is as follows. Hydrolyzes ribosome-free peptidyl-tRNAs (with 1 or more amino acids incorporated), which drop off the ribosome during protein synthesis, or as a result of ribosome stalling. Functionally, catalyzes the release of premature peptidyl moieties from peptidyl-tRNA molecules trapped in stalled 50S ribosomal subunits, and thus maintains levels of free tRNAs and 50S ribosomes. This Idiomarina loihiensis (strain ATCC BAA-735 / DSM 15497 / L2-TR) protein is Peptidyl-tRNA hydrolase.